The following is a 473-amino-acid chain: Photosystem II CP43 reaction center protein (473 aa).

Residues 1–14 (MKTLYSLRRFYPVE) constitute a propeptide that is removed on maturation. T15 bears the N-acetylthreonine mark. T15 is subject to Phosphothreonine. The next 5 helical transmembrane spans lie at 69-93 (LFEVAHFVPEKPMYEQGLILLPHLA), 134-155 (LIGPETLEESFPFFGYVWKDRN), 178-200 (KALYFGGIYDTWAPGGGDVRKIT), 255-275 (KPFAWARRAFVWSGEAYLSYS), and 291-312 (WFNNTAYPSEFYGPTGPEASQA). A [CaMn4O5] cluster-binding site is contributed by E367. A helical membrane pass occupies residues 447 to 471 (RARAAAAGFEKGIDRDFEPVLSMTP).

It belongs to the PsbB/PsbC family. PsbC subfamily. As to quaternary structure, PSII is composed of 1 copy each of membrane proteins PsbA, PsbB, PsbC, PsbD, PsbE, PsbF, PsbH, PsbI, PsbJ, PsbK, PsbL, PsbM, PsbT, PsbX, PsbY, PsbZ, Psb30/Ycf12, at least 3 peripheral proteins of the oxygen-evolving complex and a large number of cofactors. It forms dimeric complexes. Binds multiple chlorophylls and provides some of the ligands for the Ca-4Mn-5O cluster of the oxygen-evolving complex. It may also provide a ligand for a Cl- that is required for oxygen evolution. PSII binds additional chlorophylls, carotenoids and specific lipids. is required as a cofactor.

It is found in the plastid. It localises to the chloroplast thylakoid membrane. Functionally, one of the components of the core complex of photosystem II (PSII). It binds chlorophyll and helps catalyze the primary light-induced photochemical processes of PSII. PSII is a light-driven water:plastoquinone oxidoreductase, using light energy to abstract electrons from H(2)O, generating O(2) and a proton gradient subsequently used for ATP formation. In Cryptomeria japonica (Japanese cedar), this protein is Photosystem II CP43 reaction center protein.